Here is a 274-residue protein sequence, read N- to C-terminus: 2,3,4,5-tetrahydropyridine-2,6-dicarboxylate N-succinyltransferase (274 aa).

The substrate site is built by arginine 104 and aspartate 141.

This sequence belongs to the transferase hexapeptide repeat family. Homotrimer.

It is found in the cytoplasm. The enzyme catalyses (S)-2,3,4,5-tetrahydrodipicolinate + succinyl-CoA + H2O = (S)-2-succinylamino-6-oxoheptanedioate + CoA. It participates in amino-acid biosynthesis; L-lysine biosynthesis via DAP pathway; LL-2,6-diaminopimelate from (S)-tetrahydrodipicolinate (succinylase route): step 1/3. The sequence is that of 2,3,4,5-tetrahydropyridine-2,6-dicarboxylate N-succinyltransferase from Shigella boydii serotype 4 (strain Sb227).